Here is a 277-residue protein sequence, read N- to C-terminus: Proteasome subunit beta type-7 (277 aa).

Positions 1–43 are cleaved as a propeptide — removed in mature form; it reads MAAVSVFQAPVGGFSFDNCRRNAVLEADFAKKGFKLPKARKTG. Threonine 44 serves as the catalytic Nucleophile.

It belongs to the peptidase T1B family. In terms of assembly, the 26S proteasome consists of a 20S proteasome core and two 19S regulatory subunits. The 20S proteasome core is a barrel-shaped complex made of 28 subunits that are arranged in four stacked rings. The two outer rings are each formed by seven alpha subunits, and the two inner rings are formed by seven beta subunits. The proteolytic activity is exerted by three beta-subunits PSMB5, PSMB6 and PSMB7.

Its subcellular location is the cytoplasm. It is found in the nucleus. It carries out the reaction Cleavage of peptide bonds with very broad specificity.. Functionally, component of the 20S core proteasome complex involved in the proteolytic degradation of most intracellular proteins. This complex plays numerous essential roles within the cell by associating with different regulatory particles. Associated with two 19S regulatory particles, forms the 26S proteasome and thus participates in the ATP-dependent degradation of ubiquitinated proteins. The 26S proteasome plays a key role in the maintenance of protein homeostasis by removing misfolded or damaged proteins that could impair cellular functions, and by removing proteins whose functions are no longer required. Associated with the PA200 or PA28, the 20S proteasome mediates ubiquitin-independent protein degradation. This type of proteolysis is required in several pathways including spermatogenesis (20S-PA200 complex) or generation of a subset of MHC class I-presented antigenic peptides (20S-PA28 complex). Within the 20S core complex, PSMB7 displays a trypsin-like activity. This is Proteasome subunit beta type-7 (Psmb7) from Rattus norvegicus (Rat).